The primary structure comprises 109 residues: Aquaporin-2 (109 aa).

Topologically, residues 1–6 are cytoplasmic; sequence SIAFSR. Residues 7–27 traverse the membrane as a helical segment; that stretch reads AVFAEFLATLIFVFFGLGSAL. Residues 28 to 35 lie on the Extracellular side of the membrane; sequence NWQQSLPS. A helical transmembrane segment spans residues 36-54; that stretch reads VLQIAMAFGLAIGTLVQAL. Over 55–59 the chain is Cytoplasmic; the sequence is GHISG. The discontinuously helical intramembrane region spans 60–69; it reads AHINPAVTVA. The NPA 1 signature appears at 63–65; sequence NPA. The Cytoplasmic segment spans residues 70–80; that stretch reads CLVGCHVSFLR. Residues 81–102 traverse the membrane as a helical segment; sequence AAFYVAAQLLGAVAGAALLHEV. The Extracellular segment spans residues 103–109; it reads TPSDVRG.

It belongs to the MIP/aquaporin (TC 1.A.8) family. Homotetramer. In terms of processing, serine phosphorylation is necessary and sufficient for expression at the apical membrane. Endocytosis is not phosphorylation-dependent. N-glycosylated.

It localises to the apical cell membrane. Its subcellular location is the basolateral cell membrane. The protein localises to the cell membrane. It is found in the cytoplasmic vesicle membrane. The protein resides in the golgi apparatus. It localises to the trans-Golgi network membrane. The enzyme catalyses H2O(in) = H2O(out). The catalysed reaction is glycerol(in) = glycerol(out). Functionally, forms a water-specific channel that provides the plasma membranes of renal collecting duct with high permeability to water, thereby permitting water to move in the direction of an osmotic gradient. Plays an essential role in renal water homeostasis. Could also be permeable to glycerol. This chain is Aquaporin-2, found in Talpa europaea (European mole).